The following is a 112-amino-acid chain: ATP-dependent Clp protease adapter protein ClpS (112 aa).

It belongs to the ClpS family. As to quaternary structure, binds to the N-terminal domain of the chaperone ClpA.

Its function is as follows. Involved in the modulation of the specificity of the ClpAP-mediated ATP-dependent protein degradation. The chain is ATP-dependent Clp protease adapter protein ClpS from Rhodococcus jostii (strain RHA1).